Consider the following 244-residue polypeptide: WUSCHEL-related homeobox 3 (244 aa).

Positions 4-68 form a DNA-binding region, homeobox; WUS-type; sequence VASTRWCPTP…NHKARDRQKL (65 aa).

It belongs to the WUS homeobox family. Expressed in aerial parts of seedlings, inflorescences and flowers at low level. Expressed in a restricted number of L1 cells at the lateral regions of flower primordia.

The protein resides in the nucleus. In terms of biological role, probable transcription factor required to initiate organ founder cells in a lateral domain of shoot meristems. Involved in the lateral sepal axis-dependent development of flowers, probably by regulating the proliferation of L1 cells at the lateral region of flower primordia. Required for the formation of the margin cells of the first and second whorl organs. In Arabidopsis thaliana (Mouse-ear cress), this protein is WUSCHEL-related homeobox 3 (WOX3).